Consider the following 253-residue polypeptide: MNLIDKKFEELKIKGKKAFIGYTTFGYPTKGETLDYIKLIYSYVDVLELGFPFSDPIADGEVIQRASVKALKEDIKLDHLFYSIEKFKKDKPIAIMLYANTVYKRGIEKFFKDCKDFGADAVIIPDISYEESAEFKAACRENGVHYIDLISISSIERAKMIAKTSKGFVYCVTRKGVTGFKGEIDKSIYELLSELKKVTSTPLAVGFGIKSKEDVLKLKEVADGIVIGSAIINKIDEGKEDLVSFLETIRSVL.

Catalysis depends on proton acceptor residues E48 and D59.

It belongs to the TrpA family. In terms of assembly, tetramer of two alpha and two beta chains.

The enzyme catalyses (1S,2R)-1-C-(indol-3-yl)glycerol 3-phosphate + L-serine = D-glyceraldehyde 3-phosphate + L-tryptophan + H2O. It functions in the pathway amino-acid biosynthesis; L-tryptophan biosynthesis; L-tryptophan from chorismate: step 5/5. In terms of biological role, the alpha subunit is responsible for the aldol cleavage of indoleglycerol phosphate to indole and glyceraldehyde 3-phosphate. The sequence is that of Tryptophan synthase alpha chain from Caldicellulosiruptor saccharolyticus (strain ATCC 43494 / DSM 8903 / Tp8T 6331).